Consider the following 281-residue polypeptide: 4-diphosphocytidyl-2-C-methyl-D-erythritol kinase (281 aa).

Lys-15 is a catalytic residue. Residue 98–108 (PTGAGLGGGSS) participates in ATP binding. Asp-140 is an active-site residue.

The protein belongs to the GHMP kinase family. IspE subfamily.

It catalyses the reaction 4-CDP-2-C-methyl-D-erythritol + ATP = 4-CDP-2-C-methyl-D-erythritol 2-phosphate + ADP + H(+). Its pathway is isoprenoid biosynthesis; isopentenyl diphosphate biosynthesis via DXP pathway; isopentenyl diphosphate from 1-deoxy-D-xylulose 5-phosphate: step 3/6. In terms of biological role, catalyzes the phosphorylation of the position 2 hydroxy group of 4-diphosphocytidyl-2C-methyl-D-erythritol. The sequence is that of 4-diphosphocytidyl-2-C-methyl-D-erythritol kinase from Neisseria gonorrhoeae (strain ATCC 700825 / FA 1090).